Here is an 891-residue protein sequence, read N- to C-terminus: Alanine--tRNA ligase (891 aa).

The Zn(2+) site is built by H564, H568, C678, and H682.

Belongs to the class-II aminoacyl-tRNA synthetase family. Zn(2+) is required as a cofactor.

Its subcellular location is the cytoplasm. It catalyses the reaction tRNA(Ala) + L-alanine + ATP = L-alanyl-tRNA(Ala) + AMP + diphosphate. Its function is as follows. Catalyzes the attachment of alanine to tRNA(Ala) in a two-step reaction: alanine is first activated by ATP to form Ala-AMP and then transferred to the acceptor end of tRNA(Ala). Also edits incorrectly charged Ser-tRNA(Ala) and Gly-tRNA(Ala) via its editing domain. This Nitrobacter winogradskyi (strain ATCC 25391 / DSM 10237 / CIP 104748 / NCIMB 11846 / Nb-255) protein is Alanine--tRNA ligase.